The chain runs to 201 residues: Small ribosomal subunit protein uS4 (201 aa).

The region spanning 103-167 (RRLQTIVTKK…SKIPQVLEKT (65 aa)) is the S4 RNA-binding domain. Residues 163–201 (VLEKTKSEAPAEETVEAPAEETVEAPAEEKKEESPSTES) form a disordered region. Positions 172-185 (PAEETVEAPAEETV) are enriched in acidic residues. The span at 189–201 (AEEKKEESPSTES) shows a compositional bias: basic and acidic residues.

This sequence belongs to the universal ribosomal protein uS4 family. As to quaternary structure, part of the 30S ribosomal subunit. Contacts protein S5. The interaction surface between S4 and S5 is involved in control of translational fidelity.

Its function is as follows. One of the primary rRNA binding proteins, it binds directly to 16S rRNA where it nucleates assembly of the body of the 30S subunit. Functionally, with S5 and S12 plays an important role in translational accuracy. The polypeptide is Small ribosomal subunit protein uS4 (Nitrosopumilus maritimus (strain SCM1)).